The following is a 90-amino-acid chain: Small ribosomal subunit protein bS16 (90 aa).

This sequence belongs to the bacterial ribosomal protein bS16 family.

This Listeria monocytogenes serotype 4b (strain F2365) protein is Small ribosomal subunit protein bS16.